We begin with the raw amino-acid sequence, 370 residues long: Cytochrome b (370 aa).

Helical transmembrane passes span 25 to 45 (FGSM…FLAV), 69 to 90 (WMMQ…YIHI), 105 to 125 (WLSG…GYVL), and 170 to 190 (FFAL…LHIL). Positions 75 and 89 each coordinate heme b. Residues H174 and H188 each contribute to the heme b site. H193 provides a ligand contact to a ubiquinone. A run of 4 helical transmembrane segments spans residues 218-238 (YKDM…VSFF), 280-300 (LGGA…PFTH), 312-332 (LMQL…WTAT), and 339-358 (FTTI…ISNP).

Belongs to the cytochrome b family. The cytochrome bc1 complex contains 3 respiratory subunits (MT-CYB, CYC1 and UQCRFS1), 2 core proteins (UQCRC1 and UQCRC2) and probably 6 low-molecular weight proteins. Heme b serves as cofactor.

It is found in the mitochondrion inner membrane. Component of the ubiquinol-cytochrome c reductase complex (complex III or cytochrome b-c1 complex) that is part of the mitochondrial respiratory chain. The b-c1 complex mediates electron transfer from ubiquinol to cytochrome c. Contributes to the generation of a proton gradient across the mitochondrial membrane that is then used for ATP synthesis. The chain is Cytochrome b (MT-CYB) from Chilabothrus strigilatus strigilatus (New Providence boa constrictor).